The chain runs to 239 residues: UPF0173 metal-dependent hydrolase Msm_0779 (239 aa).

Belongs to the UPF0173 family.

This Methanobrevibacter smithii (strain ATCC 35061 / DSM 861 / OCM 144 / PS) protein is UPF0173 metal-dependent hydrolase Msm_0779.